A 199-amino-acid chain; its full sequence is Chaperone protein TorD (199 aa).

It belongs to the TorD/DmsD family. TorD subfamily.

The protein localises to the cytoplasm. Its function is as follows. Involved in the biogenesis of TorA. Acts on TorA before the insertion of the molybdenum cofactor and, as a result, probably favors a conformation of the apoenzyme that is competent for acquiring the cofactor. In Escherichia coli O45:K1 (strain S88 / ExPEC), this protein is Chaperone protein TorD.